A 202-amino-acid polypeptide reads, in one-letter code: GTP cyclohydrolase 1 (202 aa).

Residues C90, H93, and C163 each contribute to the Zn(2+) site.

Belongs to the GTP cyclohydrolase I family. In terms of assembly, homomer.

The catalysed reaction is GTP + H2O = 7,8-dihydroneopterin 3'-triphosphate + formate + H(+). Its pathway is cofactor biosynthesis; 7,8-dihydroneopterin triphosphate biosynthesis; 7,8-dihydroneopterin triphosphate from GTP: step 1/1. This chain is GTP cyclohydrolase 1, found in Mycolicibacterium gilvum (strain PYR-GCK) (Mycobacterium gilvum (strain PYR-GCK)).